Reading from the N-terminus, the 485-residue chain is Ribulose bisphosphate carboxylase large chain (485 aa).

A propeptide spanning residues Met1–Ser2 is cleaved from the precursor. Position 3 is an N-acetylproline (Pro3). Lys14 bears the N6,N6,N6-trimethyllysine mark. Substrate contacts are provided by Asn123 and Thr173. Lys175 (proton acceptor) is an active-site residue. Lys177 provides a ligand contact to substrate. The Mg(2+) site is built by Lys201, Asp203, and Glu204. Lys201 bears the N6-carboxylysine mark. The active-site Proton acceptor is the His294. Substrate-binding residues include Arg295, His327, and Ser379.

The protein belongs to the RuBisCO large chain family. Type I subfamily. In terms of assembly, heterohexadecamer of 8 large chains and 8 small chains; disulfide-linked. The disulfide link is formed within the large subunit homodimers. Mg(2+) serves as cofactor. Post-translationally, the disulfide bond which can form in the large chain dimeric partners within the hexadecamer appears to be associated with oxidative stress and protein turnover.

The protein localises to the plastid. The protein resides in the chloroplast. The enzyme catalyses 2 (2R)-3-phosphoglycerate + 2 H(+) = D-ribulose 1,5-bisphosphate + CO2 + H2O. It carries out the reaction D-ribulose 1,5-bisphosphate + O2 = 2-phosphoglycolate + (2R)-3-phosphoglycerate + 2 H(+). RuBisCO catalyzes two reactions: the carboxylation of D-ribulose 1,5-bisphosphate, the primary event in carbon dioxide fixation, as well as the oxidative fragmentation of the pentose substrate in the photorespiration process. Both reactions occur simultaneously and in competition at the same active site. The chain is Ribulose bisphosphate carboxylase large chain from Flaveria bidentis (Coastal plain yellowtops).